The primary structure comprises 1773 residues: Mucin-22 (1773 aa).

An N-terminal signal peptide occupies residues 1–26 (MRRGNISPAFWFLWLLLFGLLGPSSE). Topologically, residues 27–1660 (NTTAFTKGSD…VIKPSGYLQP (1634 aa)) are extracellular. Disordered regions lie at residues 61–102 (TGSK…TDSG), 176–357 (TMAS…SETT), 372–405 (MGSE…VGSE), 434–572 (SETI…STAS), 590–674 (TVGS…EGSE), 754–1026 (DTTT…ETTM), 1064–1485 (TTIA…GSET), and 1603–1639 (MGAS…SMGT). Residues 153 to 1514 (MASSTTSTAG…PTATSLTGSE (1362 aa)) form a 124 X 10 AA approximate repeats region. Residues 178-243 (ASTTGSETAT…GSEATTTSTA (66 aa)) show a composition bias toward low complexity. The segment covering 248–258 (ITASSMSSETT) has biased composition (polar residues). Residues 262–357 (AAGSNTTTAS…TVSTAGSETT (96 aa)) are compositionally biased toward low complexity. Composition is skewed to low complexity over residues 440–481 (STAG…AAST) and 490–546 (STAG…SEPT). The segment covering 547–572 (MASTMGSETTMASTIGPETTKVSTAS) has biased composition (polar residues). 2 stretches are compositionally biased toward low complexity: residues 755 to 1025 (TTTA…SETT) and 1064 to 1465 (TTIA…GSET). Composition is skewed to polar residues over residues 1466 to 1485 (NTAC…GSET) and 1615 to 1639 (RTTT…SMGT). A helical membrane pass occupies residues 1661-1681 (WAIILISLAAVVAAVGLSVGL). Topologically, residues 1682–1773 (SFCLRNLFFP…GGHYGHGGGH (92 aa)) are cytoplasmic.

Expressed in lung by serous cells of the submucosal gland (at protein level). Detected in the placenta, lung and testis.

It localises to the membrane. The polypeptide is Mucin-22 (MUC22) (Homo sapiens (Human)).